We begin with the raw amino-acid sequence, 540 residues long: Pentatricopeptide repeat-containing protein At1g80880, mitochondrial (540 aa).

The N-terminal 87 residues, Met1–Leu87, are a transit peptide targeting the mitochondrion. 10 PPR repeats span residues Asp154–Val184, Thr188–Pro222, Tyr223–Leu253, Asp257–Pro292, Asn293–Pro327, Gly328–Pro362, Asp363–Pro397, Phe402–Pro428, Thr429–Ala463, and Asn464–Gly498. Residues Val514 to Lys540 form a disordered region.

It belongs to the PPR family. P subfamily.

The protein localises to the mitochondrion. This is Pentatricopeptide repeat-containing protein At1g80880, mitochondrial from Arabidopsis thaliana (Mouse-ear cress).